Reading from the N-terminus, the 910-residue chain is DNA mismatch repair protein MutS (910 aa).

Residues 1–11 (MEAKVEEKEPE) are compositionally biased toward basic and acidic residues. The disordered stretch occupies residues 1-21 (MEAKVEEKEPEPVENAGPDAP). Residue 658–665 (GPNMGGKS) participates in ATP binding.

Belongs to the DNA mismatch repair MutS family.

Its function is as follows. This protein is involved in the repair of mismatches in DNA. It is possible that it carries out the mismatch recognition step. This protein has a weak ATPase activity. This chain is DNA mismatch repair protein MutS, found in Brucella suis (strain ATCC 23445 / NCTC 10510).